A 272-amino-acid polypeptide reads, in one-letter code: tRNA pseudouridine synthase B (272 aa).

Asp38 (nucleophile) is an active-site residue.

This sequence belongs to the pseudouridine synthase TruB family. Type 1 subfamily.

The enzyme catalyses uridine(55) in tRNA = pseudouridine(55) in tRNA. Responsible for synthesis of pseudouridine from uracil-55 in the psi GC loop of transfer RNAs. The polypeptide is tRNA pseudouridine synthase B (Campylobacter jejuni subsp. jejuni serotype O:23/36 (strain 81-176)).